The chain runs to 57 residues: UPF0391 membrane protein RPD_3366 (57 aa).

A run of 2 helical transmembrane segments spans residues 4–24 (WVVT…GGIA) and 30–50 (IAKV…VVGL).

This sequence belongs to the UPF0391 family.

It is found in the cell membrane. This is UPF0391 membrane protein RPD_3366 from Rhodopseudomonas palustris (strain BisB5).